The chain runs to 690 residues: Tripartite terminase subunit 3 (690 aa).

Residues 226-233 carry the Walker A motif motif; the sequence is IPRRHGKT. The Walker B motif motif lies at 321–326; that stretch reads LLFVDE. The active-site For ATPase activity is the glutamate 326. Active-site for nuclease activity residues include aspartate 481, glutamate 555, and aspartate 667.

It belongs to the herpesviridae TRM3 protein family. In terms of assembly, interacts with the terminase subunits TRM1 and TRM2. Interacts with portal protein.

Its subcellular location is the host nucleus. In terms of biological role, component of the molecular motor that translocates viral genomic DNA in empty capsid during DNA packaging. Forms a tripartite terminase complex together with TRM1 and TRM2 in the host cytoplasm. Once the complex reaches the host nucleus, it interacts with the capsid portal vertex. This portal forms a ring in which genomic DNA is translocated into the capsid. TRM3 carries an RNase H-like nuclease activity that plays an important role for the cleavage of concatemeric viral DNA into unit length genomes. The protein is Tripartite terminase subunit 3 of Homo sapiens (Human).